A 389-amino-acid polypeptide reads, in one-letter code: MEMKDYIFTSESVSEGHPDKVADQVSDSILDAILAQDPRARVACETLVTTGMAVIAGEITTSAVVDYPKVVRETIREIGYNDSAMGFDWETCAVLVSIDKQSPDISQGVTEGEGMFKEQGAGDQGLMFGYACTETPELMPMSITYAHKLTQKLAEVRKNGVLDFLRPDSKSQVSVEYVDDKPVRVDTVVISSQHTPEVSYEAIKEGIIEEVVKKIIPAHLMDERTRMLINPTGRFVVGGPMGDCGLTGRKIIVDSYGGHGAHGGGAFSGKDPSKVDRSAAYMGRYVAKNLVAAGLCEKCEVQVAYAIGVAEPVSVMVDTAGTGKISSKRIAEIVREVFDLRPRAIIEQLDLLRPIYRKTAAYGHFGRELPEFTWERTDKVYMIRQKAGI.

Residue H17 coordinates ATP. A Mg(2+)-binding site is contributed by D19. A K(+)-binding site is contributed by E45. Residues E58 and Q101 each contribute to the L-methionine site. The tract at residues 101 to 111 (QSPDISQGVTE) is flexible loop. ATP contacts are provided by residues 168-170 (DSK), 234-235 (RF), D243, 249-250 (RK), A266, and K270. D243 serves as a coordination point for L-methionine. K274 is an L-methionine binding site.

It belongs to the AdoMet synthase family. In terms of assembly, homotetramer; dimer of dimers. Requires Mg(2+) as cofactor. It depends on K(+) as a cofactor.

It localises to the cytoplasm. It carries out the reaction L-methionine + ATP + H2O = S-adenosyl-L-methionine + phosphate + diphosphate. It functions in the pathway amino-acid biosynthesis; S-adenosyl-L-methionine biosynthesis; S-adenosyl-L-methionine from L-methionine: step 1/1. In terms of biological role, catalyzes the formation of S-adenosylmethionine (AdoMet) from methionine and ATP. The overall synthetic reaction is composed of two sequential steps, AdoMet formation and the subsequent tripolyphosphate hydrolysis which occurs prior to release of AdoMet from the enzyme. The protein is S-adenosylmethionine synthase of Geobacter metallireducens (strain ATCC 53774 / DSM 7210 / GS-15).